Here is a 352-residue protein sequence, read N- to C-terminus: UDP-N-acetylglucosamine--N-acetylmuramyl-(pentapeptide) pyrophosphoryl-undecaprenol N-acetylglucosamine transferase (352 aa).

The UDP-N-acetyl-alpha-D-glucosamine site is built by serine 195 and glutamine 287.

Belongs to the glycosyltransferase 28 family. MurG subfamily.

It is found in the cell membrane. It catalyses the reaction Mur2Ac(oyl-L-Ala-gamma-D-Glu-L-Lys-D-Ala-D-Ala)-di-trans,octa-cis-undecaprenyl diphosphate + UDP-N-acetyl-alpha-D-glucosamine = beta-D-GlcNAc-(1-&gt;4)-Mur2Ac(oyl-L-Ala-gamma-D-Glu-L-Lys-D-Ala-D-Ala)-di-trans,octa-cis-undecaprenyl diphosphate + UDP + H(+). It participates in cell wall biogenesis; peptidoglycan biosynthesis. Functionally, cell wall formation. Catalyzes the transfer of a GlcNAc subunit on undecaprenyl-pyrophosphoryl-MurNAc-pentapeptide (lipid intermediate I) to form undecaprenyl-pyrophosphoryl-MurNAc-(pentapeptide)GlcNAc (lipid intermediate II). The sequence is that of UDP-N-acetylglucosamine--N-acetylmuramyl-(pentapeptide) pyrophosphoryl-undecaprenol N-acetylglucosamine transferase from Streptococcus pneumoniae serotype 4 (strain ATCC BAA-334 / TIGR4).